Here is a 365-residue protein sequence, read N- to C-terminus: Flagellar P-ring protein (365 aa).

The N-terminal stretch at 1 to 19 (MIKFLSALILLLVTTAAQA) is a signal peptide.

This sequence belongs to the FlgI family. As to quaternary structure, the basal body constitutes a major portion of the flagellar organelle and consists of four rings (L,P,S, and M) mounted on a central rod.

Its subcellular location is the periplasm. It localises to the bacterial flagellum basal body. In terms of biological role, assembles around the rod to form the L-ring and probably protects the motor/basal body from shearing forces during rotation. This chain is Flagellar P-ring protein, found in Shigella flexneri serotype 5b (strain 8401).